The primary structure comprises 1307 residues: tRNA(adenine(34)) deaminase, chloroplastic (1307 aa).

Residues 1-55 (MFNTYTNSLQWPIRSRNQQDYCSLLPERSESYKLSKAYTSSRCYCVSSRSSCCCC) constitute a chloroplast transit peptide. 7 disordered regions span residues 245 to 377 (EYIG…ESTG), 439 to 458 (SSED…SSQE), 544 to 563 (HNPL…SHTS), 576 to 618 (EKRL…GQTT), 753 to 807 (GVIN…ATEG), 837 to 957 (SRAG…EEGG), and 975 to 1073 (LPSR…SVSA). Positions 267–278 (SSCSSYYSLASS) are enriched in low complexity. Positions 280-309 (EFESDTEDQEEDVEIYRENVRSSEKKVVDQ) form a coiled coil. Acidic residues predominate over residues 281-292 (FESDTEDQEEDV). Basic and acidic residues predominate over residues 293-321 (EIYRENVRSSEKKVVDQSAKRLKSRKEAS). A compositionally biased stretch (polar residues) spans 367–377 (QTENRVSESTG). Basic and acidic residues predominate over residues 439–448 (SSEDRVSEMR). 2 stretches are compositionally biased toward polar residues: residues 546 to 563 (PLQT…SHTS) and 582 to 591 (QGSTTAVQSD). Basic and acidic residues-rich tracts occupy residues 592–615 (SKVE…KKDG) and 760–771 (EEQRAESNQLKR). Over residues 852–863 (SSPNESVSSATW) the composition is skewed to polar residues. The span at 866-883 (GREHDGSSDDNTKGDKVL) shows a compositional bias: basic and acidic residues. 3 stretches are compositionally biased toward polar residues: residues 895–907 (VGQT…SEYP), 924–947 (SSPS…SGNQ), and 1045–1073 (SGSS…SVSA). A CMP/dCMP-type deaminase domain is found at 1108–1230 (TVDEIFMREA…RLFPGGEGNG (123 aa)). Residue histidine 1159 coordinates Zn(2+). Glutamate 1161 (proton donor) is an active-site residue. The Zn(2+) site is built by cysteine 1189 and cysteine 1192. Residues 1268 to 1293 (QLRRKKKDKNSDPPTPTDHHHHHLPK) form a disordered region.

Belongs to the cytidine and deoxycytidylate deaminase family. As to quaternary structure, homodimer. Zn(2+) is required as a cofactor.

Its subcellular location is the plastid. It is found in the chloroplast. The enzyme catalyses adenosine(34) in tRNA + H2O + H(+) = inosine(34) in tRNA + NH4(+). Deaminates adenosines to inosines in tRNA-Arg(ACG). Exclusively involved in A-to-I editing of the prokaryote-type chloroplast-tRNA and not involved in C-to-U editing. The protein is tRNA(adenine(34)) deaminase, chloroplastic (TADA) of Arabidopsis thaliana (Mouse-ear cress).